Reading from the N-terminus, the 420-residue chain is Bile acid-CoA:amino acid N-acyltransferase (420 aa).

The residue at position 40 (Lys40) is an N6-succinyllysine. The residue at position 125 (Ser125) is a Phosphoserine. Active-site charge relay system residues include Cys235 and Asp328. 2 positions are modified to N6-succinyllysine: Lys346 and Lys350. Residue His362 is the Charge relay system of the active site. N6-succinyllysine is present on Lys409. A Phosphoserine modification is found at Ser418.

This sequence belongs to the C/M/P thioester hydrolase family. Monomer. As to expression, highly expressed in liver, kidney, gallbladder, proximal intestine and distal intestine. Weakly expressed in adrenal gland, lung, brain and muscle.

It is found in the cytoplasm. The protein localises to the cytosol. Its subcellular location is the peroxisome. It carries out the reaction choloyl-CoA + glycine = glycocholate + CoA + H(+). The catalysed reaction is hexadecanoyl-CoA + H2O = hexadecanoate + CoA + H(+). The enzyme catalyses choloyl-CoA + H2O = cholate + CoA + H(+). It catalyses the reaction chenodeoxycholoyl-CoA + H2O = chenodeoxycholate + CoA + H(+). It carries out the reaction eicosanoyl-CoA + H2O = eicosanoate + CoA + H(+). The catalysed reaction is octadecanoyl-CoA + H2O = octadecanoate + CoA + H(+). The enzyme catalyses docosanoyl-CoA + H2O = docosanoate + CoA + H(+). It catalyses the reaction tetracosanoyl-CoA + H2O = tetracosanoate + CoA + H(+). It carries out the reaction hexacosanoyl-CoA + H2O = hexacosanoate + CoA + H(+). The catalysed reaction is dodecanoyl-CoA + H2O = dodecanoate + CoA + H(+). The enzyme catalyses tetradecanoyl-CoA + H2O = tetradecanoate + CoA + H(+). It catalyses the reaction choloyl-CoA + taurine = taurocholate + CoA + H(+). It carries out the reaction chenodeoxycholoyl-CoA + glycine = glycochenodeoxycholate + CoA + H(+). The catalysed reaction is chenodeoxycholoyl-CoA + taurine = taurochenodeoxycholate + CoA + H(+). The enzyme catalyses eicosanoyl-CoA + glycine = N-eicosanoylglycinate + CoA + H(+). It catalyses the reaction hexacosanoyl-CoA + glycine = N-hexacosanoylglycine + CoA + H(+). It carries out the reaction docosanoyl-CoA + glycine = N-docosanoylglycine + CoA + H(+). Catalyzes the amidation of bile acids (BAs) with the amino acid taurine. Selective for taurine conjugation of cholyl CoA and only taurine-conjugated BAs are found in bile. Amidation of BAs in the liver with taurine prior to their excretion into bile is an important biochemical event in bile acid metabolism. This conjugation (or amidation) plays several important biological roles in that it promotes the secretion of BAs and cholesterol into bile and increases the detergent properties of BAs in the intestine, which facilitates lipid and vitamin absorption. May also act as an acyl-CoA thioesterase that regulates intracellular levels of free fatty acids. In vitro, catalyzes the hydrolysis of long- and very long-chain saturated acyl-CoAs to the free fatty acid and coenzyme A (CoASH), and conjugates glycine to these acyl-CoAs. The polypeptide is Bile acid-CoA:amino acid N-acyltransferase (Baat) (Mus musculus (Mouse)).